The chain runs to 188 residues: UPF0301 protein XCV3063 (188 aa).

Belongs to the UPF0301 (AlgH) family.

The sequence is that of UPF0301 protein XCV3063 from Xanthomonas euvesicatoria pv. vesicatoria (strain 85-10) (Xanthomonas campestris pv. vesicatoria).